The sequence spans 115 residues: NTF2-related export protein 1 (115 aa).

Positions 7-115 constitute an NTF2 domain; the sequence is YAQEFVQRYY…LVLRSSTNFL (109 aa).

Its subcellular location is the nucleus. Its function is as follows. Stimulator of protein export for NES-containing proteins. Also plays a role in mRNA nuclear export. The chain is NTF2-related export protein 1 (nxt1) from Schizosaccharomyces pombe (strain 972 / ATCC 24843) (Fission yeast).